We begin with the raw amino-acid sequence, 357 residues long: Protein FAM118A (357 aa).

M1 is subject to N-acetylmethionine. The helical transmembrane segment at L30–C50 threads the bilayer. S311 carries the post-translational modification Phosphoserine.

It belongs to the FAM118 family.

It is found in the membrane. The polypeptide is Protein FAM118A (FAM118A) (Homo sapiens (Human)).